Here is a 535-residue protein sequence, read N- to C-terminus: Importin subunit alpha-2 (535 aa).

Residues 1–58 (MSLRPNAKTEVRRNRYKVAVDAEEGRRRREDNMVEIRKSKREESLQKKRREGLQANQL) enclose the IBB domain. Residues 20 to 46 (VDAEEGRRRREDNMVEIRKSKREESLQ) show a composition bias toward basic and acidic residues. The segment at 20 to 67 (VDAEEGRRRREDNMVEIRKSKREESLQKKRREGLQANQLPQFAPSPVP) is disordered. ARM repeat units follow at residues 67–106 (PASS…KLLS), 110–150 (SPPI…NIAS), 153–192 (SENT…NVAG), 195–235 (PRCR…NFCR), 237–276 (KPQP…YLSD), 279–318 (NDKI…NIVT), 321–361 (DLQT…NITA), 364–403 (RDQI…NATS), 407–446 (PDQI…NILK), and 461–500 (NFYA…TYWL).

It belongs to the importin alpha family. Forms a complex with the importin subunit beta-1 KPNB1. Interacts with A.tumefaciens VirD2 and VirE2. Binds to SWO1.

The protein localises to the nucleus envelope. Functionally, binds to conventional NLS motifs and mediates nuclear protein import across the nuclear envelope. Involved in the maintenance of cell wall integrity under salt stress via interaction with SWO1. Acts as a cellular receptor for the nuclear import of the virD2 protein of Agrobacterium, but is not essential for Agrobacterium-mediated root transformation. In Arabidopsis thaliana (Mouse-ear cress), this protein is Importin subunit alpha-2.